Here is a 262-residue protein sequence, read N- to C-terminus: Small ribosomal subunit protein uS2 (262 aa).

The protein belongs to the universal ribosomal protein uS2 family.

In Borrelia garinii subsp. bavariensis (strain ATCC BAA-2496 / DSM 23469 / PBi) (Borreliella bavariensis), this protein is Small ribosomal subunit protein uS2.